The primary structure comprises 293 residues: Movement protein BC1 (293 aa).

This sequence belongs to the begomovirus movement protein BC1 family. As to quaternary structure, binds to dimeric supercoiled plasmid DNA. In terms of processing, phosphorylated.

Its subcellular location is the host cell membrane. The protein localises to the host microsome membrane. It localises to the host endoplasmic reticulum membrane. Transports viral genome to neighboring plant cells directly through plasmosdesmata, without any budding. The movement protein allows efficient cell to cell propagation, by bypassing the host cell wall barrier. Begomovirus genome is shuttled out of nucleus by Nuclear shuttle protein (NSP) and the movement protein transports the DNA-NSP complex to cell plasmodesmata and facilitates further movement across the cell wall. This chain is Movement protein BC1, found in Cucurbita moschata (Winter crookneck squash).